A 101-amino-acid chain; its full sequence is NAD(P)H-quinone oxidoreductase subunit 4L, chloroplastic (101 aa).

A run of 3 helical transmembrane segments spans residues 2-22, 32-52, and 61-81; these read ILEH…YGLI, MCLE…SDFF, and IFSI…LAIV.

This sequence belongs to the complex I subunit 4L family. As to quaternary structure, NDH is composed of at least 16 different subunits, 5 of which are encoded in the nucleus.

It is found in the plastid. It localises to the chloroplast thylakoid membrane. It catalyses the reaction a plastoquinone + NADH + (n+1) H(+)(in) = a plastoquinol + NAD(+) + n H(+)(out). It carries out the reaction a plastoquinone + NADPH + (n+1) H(+)(in) = a plastoquinol + NADP(+) + n H(+)(out). Its function is as follows. NDH shuttles electrons from NAD(P)H:plastoquinone, via FMN and iron-sulfur (Fe-S) centers, to quinones in the photosynthetic chain and possibly in a chloroplast respiratory chain. The immediate electron acceptor for the enzyme in this species is believed to be plastoquinone. Couples the redox reaction to proton translocation, and thus conserves the redox energy in a proton gradient. The protein is NAD(P)H-quinone oxidoreductase subunit 4L, chloroplastic of Oenothera argillicola (Appalachian evening primrose).